The sequence spans 371 residues: DNA replication and repair protein RecF (371 aa).

30-37 (GPNAQGKT) serves as a coordination point for ATP.

The protein belongs to the RecF family.

Its subcellular location is the cytoplasm. Its function is as follows. The RecF protein is involved in DNA metabolism; it is required for DNA replication and normal SOS inducibility. RecF binds preferentially to single-stranded, linear DNA. It also seems to bind ATP. The polypeptide is DNA replication and repair protein RecF (Desulforamulus reducens (strain ATCC BAA-1160 / DSM 100696 / MI-1) (Desulfotomaculum reducens)).